A 97-amino-acid chain; its full sequence is Sperm protein associated with the nucleus on the X chromosome A (97 aa).

The interval 1–49 (MDKQSSAGGVKRSVPCDSNEANEMMPETPTGDSDPQPAPKKMKTSESST) is disordered. Residues 37-45 (PAPKKMKTS) carry the Nuclear localization signal motif.

It belongs to the SPAN-X family. As to expression, detected in testis and sperm.

The protein resides in the cytoplasm. It is found in the nucleus. In Homo sapiens (Human), this protein is Sperm protein associated with the nucleus on the X chromosome A.